Consider the following 932-residue polypeptide: Protein translocase subunit SecA (932 aa).

ATP is bound by residues glutamine 87, 105 to 109 (GEGKT), and aspartate 515. The Zn(2+) site is built by cysteine 916, cysteine 918, cysteine 927, and histidine 928.

This sequence belongs to the SecA family. As to quaternary structure, monomer and homodimer. Part of the essential Sec protein translocation apparatus which comprises SecA, SecYEG and auxiliary proteins SecDF-YajC and YidC. Zn(2+) serves as cofactor.

The protein resides in the cell inner membrane. Its subcellular location is the cytoplasm. The catalysed reaction is ATP + H2O + cellular proteinSide 1 = ADP + phosphate + cellular proteinSide 2.. Part of the Sec protein translocase complex. Interacts with the SecYEG preprotein conducting channel. Has a central role in coupling the hydrolysis of ATP to the transfer of proteins into and across the cell membrane, serving both as a receptor for the preprotein-SecB complex and as an ATP-driven molecular motor driving the stepwise translocation of polypeptide chains across the membrane. The protein is Protein translocase subunit SecA of Burkholderia multivorans (strain ATCC 17616 / 249).